The primary structure comprises 123 residues: Guanine nucleotide exchange factor MSS4 (123 aa).

An N-acetylmethionine modification is found at Met-1. Residues Glu-9–Glu-123 enclose the MSS4 domain. Residues Cys-23, Cys-26, Cys-94, and Cys-97 each coordinate Zn(2+).

It belongs to the DSS4/MSS4 family. In terms of assembly, interacts with RAB8A. As to expression, ubiquitous.

In terms of biological role, guanine-nucleotide-releasing protein that acts on members of the SEC4/YPT1/RAB subfamily. Stimulates GDP release from both YPT1, RAB3A and RAB10, but is less active on these proteins than on the SEC4 protein. Might play a general role in vesicular transport. The protein is Guanine nucleotide exchange factor MSS4 (RABIF) of Homo sapiens (Human).